The chain runs to 461 residues: Protein-serine O-palmitoleoyltransferase porcupine (461 aa).

Residues 1 to 17 (MATFSRQEFFQQLLQGC) lie on the Cytoplasmic side of the membrane. A helical transmembrane segment spans residues 18–38 (LLPTVQQGLDQIWLLLTICFA). Residues 39–66 (CRLLWRLGLPSYLKHASTVAGGFFSLYH) lie on the Extracellular side of the membrane. Residues 67-87 (FFQLHMVWVVLLSLLCYLVLF) form a helical membrane-spanning segment. Residues 88 to 95 (LCRHSSHR) lie on the Cytoplasmic side of the membrane. The chain crosses the membrane as a helical span at residues 96 to 116 (GVFLSVTILIYLLMGEMHMVD). At 117 to 152 (TVTWHKMRGAQMIVAMKAVSLGFDLDRGEVGAVPSP) the chain is on the extracellular side. A helical transmembrane segment spans residues 153 to 173 (VEFMGYLYFVGTIVFGPWISF). Over 174-198 (HSYLQAVQGRPLSRRWLKKVARSLA) the chain is Cytoplasmic. The helical transmembrane segment at 199-219 (LALLCLVLSTCVGPYLFPYFI) threads the bilayer. The Extracellular segment spans residues 220-252 (PLDGDRLLRNKKRKARGTMVRWLRAYESAVSFH). The chain crosses the membrane as a helical span at residues 253 to 273 (FSNYFVGFLSEATATLAGAGF). Topologically, residues 274 to 337 (TEEKDHLEWD…SAVLVTYAAS (64 aa)) are cytoplasmic. Residues 338-358 (ALLHGFSFHLAAVLLSLAFIT) form a helical membrane-spanning segment. The active site involves His-341. Topologically, residues 359–396 (YVEHVLRKRLAQILSACILSKRCLPDCSHRHRLGLGVR) are extracellular. The chain crosses the membrane as a helical span at residues 397 to 417 (ALNLLFGALAIFHLSYLGSLF). The Cytoplasmic segment spans residues 418 to 461 (DVDVDDTTEEQGYGMAYTVHKWSELSWASHWVTFGCWIFYRLIG).

The protein belongs to the membrane-bound acyltransferase family. Porcupine subfamily. In terms of assembly, interacts with WNT1, WNT3, WNT3A, WNT4, WNT5A, WNT5B, WNT6, WNT7A and WNT7B. Expressed in brain, heart, kidney, liver, lung, muscle, spleen and testis. Isoform 4 is strongly expressed in kidney, liver, lung, spleen and testis. Isoform 1 is strongly expressed in brain, heart and muscle and poorly in kidney, liver, lung, spleen and testis.

Its subcellular location is the endoplasmic reticulum membrane. The catalysed reaction is [Wnt protein]-L-serine + (9Z)-hexadecenoyl-CoA = [Wnt protein]-O-(9Z)-hexadecenoyl-L-serine + CoA. In terms of biological role, protein-serine O-palmitoleoyltransferase that acts as a key regulator of the Wnt signaling pathway by mediating the attachment of palmitoleate, a 16-carbon monounsaturated fatty acid (C16:1(9Z)), to Wnt proteins. Serine palmitoleoylation of WNT proteins is required for efficient binding to frizzled receptors. The sequence is that of Protein-serine O-palmitoleoyltransferase porcupine from Mus musculus (Mouse).